Consider the following 116-residue polypeptide: POU domain, class 4, transcription factor 1 (116 aa).

The region spanning 1-54 (VTQADVGSALANLKIPGVGSLSQSTICRFESLTLSHNNMIALKPILQAWLEEAE) is the POU-specific domain. The tract at residues 56–79 (AQREKMNKPELFNGGEKKRKRTSI) is disordered. Positions 72-116 (KKRKRTSIAAPEKRSLEAYFAVQPRPSSEKIAAIAEKLDLKKNVV) form a DNA-binding region, homeobox.

This sequence belongs to the POU transcription factor family. Class-4 subfamily.

It localises to the nucleus. The protein resides in the cytoplasm. Multifunctional transcription factor with different regions mediating its different effects. Acts by binding (via its C-terminal domain) to sequences related to the consensus octamer motif 5'-ATGCAAAT-3' in the regulatory regions of its target genes. Regulates the expression of specific genes involved in differentiation and survival within a subset of neuronal lineages. It has been shown that activation of some of these genes requires its N-terminal domain, maybe through a neuronal-specific cofactor. This is POU domain, class 4, transcription factor 1 (POU4F1) from Gallus gallus (Chicken).